A 384-amino-acid polypeptide reads, in one-letter code: Glucans biosynthesis protein C (384 aa).

The next 10 membrane-spanning stretches (helical) occupy residues 17-37 (AWLM…THSW), 54-74 (FIHA…SYML), 91-111 (VGIP…ILLQ), 140-160 (LWFL…FTWF), 173-193 (AISL…YAAI), 212-232 (FIVM…LAFI), 240-260 (FTTP…AYLL), 274-294 (TESV…FSLG), 311-331 (ASLF…AYIT), and 338-358 (LIGF…LYEI).

This sequence belongs to the acyltransferase 3 family. OpgC subfamily.

The protein resides in the cell membrane. It functions in the pathway glycan metabolism; osmoregulated periplasmic glucan (OPG) biosynthesis. Functionally, necessary for the succinyl substitution of periplasmic glucans. Could catalyze the transfer of succinyl residues from the cytoplasmic side of the membrane to the nascent glucan backbones on the periplasmic side of the membrane. The polypeptide is Glucans biosynthesis protein C (Salmonella gallinarum (strain 287/91 / NCTC 13346)).